The chain runs to 229 residues: MSTSKLVVAMDGPSGTGKSSVSRMLAQRLDARYLDTGAMYRIATLHALRKGVDLTDPAAIADATAGLPWSIGTDPAGEQVLLDGEDVGEEIRGDAVTKAVSAVSAVPAVRELLVAAQRRLAGEAERIVVEGRDIGTVVIPDADVKIYLTASAEARAQRRNAQNLAEGRGDDYAAVLADVQRRDHLDSTRAVSPLRPADDSVLVDTSELGIDDVIGRLLLVVSERTGAGQ.

12 to 20 (GPSGTGKSS) serves as a coordination point for ATP.

It belongs to the cytidylate kinase family. Type 1 subfamily.

Its subcellular location is the cytoplasm. It carries out the reaction CMP + ATP = CDP + ADP. The catalysed reaction is dCMP + ATP = dCDP + ADP. The chain is Cytidylate kinase from Rhodococcus jostii (strain RHA1).